Consider the following 245-residue polypeptide: DNA repair protein RecO (245 aa).

Belongs to the RecO family.

In terms of biological role, involved in DNA repair and RecF pathway recombination. The chain is DNA repair protein RecO from Anaplasma phagocytophilum (strain HZ).